The following is a 447-amino-acid chain: UDP-N-acetylmuramate--L-alanine ligase (447 aa).

Position 108–114 (108–114 (GSHGKTS)) interacts with ATP.

Belongs to the MurCDEF family.

Its subcellular location is the cytoplasm. It carries out the reaction UDP-N-acetyl-alpha-D-muramate + L-alanine + ATP = UDP-N-acetyl-alpha-D-muramoyl-L-alanine + ADP + phosphate + H(+). Its pathway is cell wall biogenesis; peptidoglycan biosynthesis. Functionally, cell wall formation. This chain is UDP-N-acetylmuramate--L-alanine ligase, found in Listeria monocytogenes serovar 1/2a (strain ATCC BAA-679 / EGD-e).